Here is a 190-residue protein sequence, read N- to C-terminus: CASP-like protein 1U3 (190 aa).

Over M1–C24 the chain is Cytoplasmic. Residues L25–L45 traverse the membrane as a helical segment. At K46–W70 the chain is on the extracellular side. A helical membrane pass occupies residues F71–L91. Topologically, residues S92–D113 are cytoplasmic. The chain crosses the membrane as a helical span at residues F114–G134. Topologically, residues K135–Q158 are extracellular. A helical transmembrane segment spans residues G159–A179. At S180–H190 the chain is on the cytoplasmic side.

This sequence belongs to the Casparian strip membrane proteins (CASP) family. As to quaternary structure, homodimer and heterodimers.

The protein resides in the cell membrane. This Physcomitrium patens (Spreading-leaved earth moss) protein is CASP-like protein 1U3.